A 314-amino-acid polypeptide reads, in one-letter code: Olfactory receptor 2Z1 (314 aa).

Topologically, residues 1 to 25 are extracellular; it reads MGDVNQSVASDFILVGLFSHSGSRQ. Asn-5 is a glycosylation site (N-linked (GlcNAc...) asparagine). Residues 26–49 traverse the membrane as a helical segment; that stretch reads LLFSLVAVMFVIGLLGNTVLLFLI. Topologically, residues 50–57 are cytoplasmic; it reads RVDSRLHT. Residues 58–79 form a helical membrane-spanning segment; the sequence is PMYFLLSQLSLFDIGCPMVTIP. Topologically, residues 80 to 100 are extracellular; that stretch reads KMASDFLRGEGATSYGGGAAQ. A helical transmembrane segment spans residues 101-120; it reads IFFLTLMGVAEGVLLVLMSY. At 121–139 the chain is on the cytoplasmic side; sequence DRYVAVCQPLQYPVLMRRQ. Residues 140 to 158 traverse the membrane as a helical segment; sequence VCLLMMGSSWVVGVLNASI. Residues 159–195 are Extracellular-facing; it reads QTSITLHFPYCASRIVDHFFCEVPALLKLSCADTCAY. Residues 196–219 form a helical membrane-spanning segment; that stretch reads EMALSTSGVLILMLPLSLIATSYG. At 220–236 the chain is on the cytoplasmic side; sequence HVLQAVLSMRSEEARHK. The helical transmembrane segment at 237–259 threads the bilayer; it reads AVTTCSSHITVVGLFYGAAVFMY. Residues 260 to 272 lie on the Extracellular side of the membrane; it reads MVPCAYHSPQQDN. Residues 273–292 form a helical membrane-spanning segment; it reads VVSLFYSLVTPTLNPLIYSL. Over 293–314 the chain is Cytoplasmic; sequence RNPEVWMALVKVLSRAGLRQMC.

The protein belongs to the G-protein coupled receptor 1 family.

Its subcellular location is the cell membrane. Odorant receptor. In Homo sapiens (Human), this protein is Olfactory receptor 2Z1 (OR2Z1).